Reading from the N-terminus, the 510-residue chain is ATP synthase subunit alpha (510 aa).

An ATP-binding site is contributed by 169–176 (GDRQTGKT).

The protein belongs to the ATPase alpha/beta chains family. F-type ATPases have 2 components, CF(1) - the catalytic core - and CF(0) - the membrane proton channel. CF(1) has five subunits: alpha(3), beta(3), gamma(1), delta(1), epsilon(1). CF(0) has three main subunits: a(1), b(2) and c(9-12). The alpha and beta chains form an alternating ring which encloses part of the gamma chain. CF(1) is attached to CF(0) by a central stalk formed by the gamma and epsilon chains, while a peripheral stalk is formed by the delta and b chains.

It is found in the cell inner membrane. The enzyme catalyses ATP + H2O + 4 H(+)(in) = ADP + phosphate + 5 H(+)(out). Functionally, produces ATP from ADP in the presence of a proton gradient across the membrane. The alpha chain is a regulatory subunit. This is ATP synthase subunit alpha from Nitrobacter winogradskyi (strain ATCC 25391 / DSM 10237 / CIP 104748 / NCIMB 11846 / Nb-255).